The following is a 272-amino-acid chain: Acyl-[acyl-carrier-protein]--UDP-N-acetylglucosamine O-acyltransferase (272 aa).

The protein belongs to the transferase hexapeptide repeat family. LpxA subfamily. As to quaternary structure, homotrimer.

Its subcellular location is the cytoplasm. The enzyme catalyses a (3R)-hydroxyacyl-[ACP] + UDP-N-acetyl-alpha-D-glucosamine = a UDP-3-O-[(3R)-3-hydroxyacyl]-N-acetyl-alpha-D-glucosamine + holo-[ACP]. It functions in the pathway glycolipid biosynthesis; lipid IV(A) biosynthesis; lipid IV(A) from (3R)-3-hydroxytetradecanoyl-[acyl-carrier-protein] and UDP-N-acetyl-alpha-D-glucosamine: step 1/6. Involved in the biosynthesis of lipid A, a phosphorylated glycolipid that anchors the lipopolysaccharide to the outer membrane of the cell. In Rhizobium leguminosarum bv. trifolii (strain WSM2304), this protein is Acyl-[acyl-carrier-protein]--UDP-N-acetylglucosamine O-acyltransferase.